We begin with the raw amino-acid sequence, 85 residues long: Homeobox protein knotted-1-like 7 (85 aa).

An ELK domain is found at 1 to 21 (ELKNELKQGYKEKLVDIREEI). The segment at residues 22 to 85 (MRKRRAGKLP…NQRKRNWHSN (64 aa)) is a DNA-binding region (homeobox; TALE-type).

It belongs to the TALE/KNOX homeobox family. As to expression, expressed in all tissues examined. Highest expression in leaves.

The protein localises to the nucleus. This chain is Homeobox protein knotted-1-like 7 (KNOX7), found in Zea mays (Maize).